A 571-amino-acid polypeptide reads, in one-letter code: Urease subunit alpha (571 aa).

The Urease domain maps to 133 to 571 (GGIDTHVHFI…LPLTQRYFLF (439 aa)). Ni(2+)-binding residues include histidine 138, histidine 140, and lysine 221. An N6-carboxylysine modification is found at lysine 221. Histidine 223 is a substrate binding site. The Ni(2+) site is built by histidine 250 and histidine 276. Histidine 324 (proton donor) is an active-site residue. Aspartate 364 is a Ni(2+) binding site.

Belongs to the metallo-dependent hydrolases superfamily. Urease alpha subunit family. Heterotrimer of UreA (gamma), UreB (beta) and UreC (alpha) subunits. Three heterotrimers associate to form the active enzyme. It depends on Ni cation as a cofactor. In terms of processing, carboxylation allows a single lysine to coordinate two nickel ions.

The protein resides in the cytoplasm. It catalyses the reaction urea + 2 H2O + H(+) = hydrogencarbonate + 2 NH4(+). It participates in nitrogen metabolism; urea degradation; CO(2) and NH(3) from urea (urease route): step 1/1. In Staphylococcus aureus (strain bovine RF122 / ET3-1), this protein is Urease subunit alpha.